A 582-amino-acid chain; its full sequence is MGLRHLVLCPGSRSGPLALAAGGMARTNLLRLSTAIDERSAAFLALGFSTATGTAAAVVTTSGTAVANLLPAAVEADRSCQPLLLLTADRPYRLKDCGANQTVNQETFLSPACRWIGQGPREGLHLFSTETLESFAEEAWQRAHHPAGAVHLNLPFEEPLHLSEEEQRVIWKGWSPKIPRSAPITPTNLAMAAEGTEGVTDRAPFALDPFRPGVVIAGAWRGLSKDLFAFQQSLREWQALSGWPVLADPLSALPSDQPGLIRSWELLLAAGLLGSHEQLQVLRLGPMSASRSLEAWLKSFGDGQLLITEGDSRCLDPLGLSVQWSHGLTTWWQHHHHRWIDADAASQQATQPLLKKWQIIDRFAQDWLDQQLPLQGAITEPALARWLSRLLPAELSIMLAASSPVRDWLAYADKSLFSRRCFSFRGASGIDGTLSLSMGLAMALGPTLLVSGDLALLHDSNGWLLAHPQRPPLVVVLIDNGGGGIFEQLLVKKAPSEAFEQLFAMPQAVDPLVLAAAHNIPHRQVACLEDLPAALEWGLFQTGPVLIRVCTHRGQDSSMRQQLREGLVMHLQSISQNGHIDL.

Belongs to the TPP enzyme family. MenD subfamily. In terms of assembly, homodimer. It depends on Mg(2+) as a cofactor. The cofactor is Mn(2+). Thiamine diphosphate serves as cofactor.

The enzyme catalyses isochorismate + 2-oxoglutarate + H(+) = 5-enolpyruvoyl-6-hydroxy-2-succinyl-cyclohex-3-ene-1-carboxylate + CO2. It functions in the pathway quinol/quinone metabolism; 1,4-dihydroxy-2-naphthoate biosynthesis; 1,4-dihydroxy-2-naphthoate from chorismate: step 2/7. Its pathway is cofactor biosynthesis; phylloquinone biosynthesis. Catalyzes the thiamine diphosphate-dependent decarboxylation of 2-oxoglutarate and the subsequent addition of the resulting succinic semialdehyde-thiamine pyrophosphate anion to isochorismate to yield 2-succinyl-5-enolpyruvyl-6-hydroxy-3-cyclohexene-1-carboxylate (SEPHCHC). The chain is 2-succinyl-5-enolpyruvyl-6-hydroxy-3-cyclohexene-1-carboxylate synthase from Prochlorococcus marinus (strain MIT 9303).